Reading from the N-terminus, the 335-residue chain is Methyltransferase pgmE (335 aa).

The protein belongs to the methyltransferase superfamily.

It functions in the pathway pigment biosynthesis. Its pathway is secondary metabolite biosynthesis. Functionally, methyltransferase; part of the gene cluster that mediates the biosynthesis of pleosporalin A, ascomycone A, as well as a third cryptic naphthoquinone derived pigment, all responsible for the coloration of conidia. Essential for the production of pleosporalin A, but not the 2 other final products. The pathway begins with the biosynthesis of the cyclized heptaketide 3-acetonyl-1,6,8-trihydroxy-2-naphthaldehyde by the NR-PKS pgmA. The C-6 hydroxyl group is further methylated by the O-methyltransferase pgmB to yield fusarubinaldehyde which is in turn oxidized by the cytochrome P450 monooxygenase pgmC at C-9. The C-1 hydroxyl group is then methylated spontaneously. Although pgmE, pgmD and pgmH are essential for the production of pleosporalin A, it is not the case for the 2 other final products and it remains difficult to assign a specific function to each enzyme. PgmF and pgmG seem not to be involved in pigment biosynthesis although they were regulated by the cluster-specific transcription factor pgmR. In Aspergillus terreus (strain NIH 2624 / FGSC A1156), this protein is Methyltransferase pgmE.